Here is a 177-residue protein sequence, read N- to C-terminus: Large ribosomal subunit protein uL6 (177 aa).

The protein belongs to the universal ribosomal protein uL6 family. Part of the 50S ribosomal subunit.

Functionally, this protein binds to the 23S rRNA, and is important in its secondary structure. It is located near the subunit interface in the base of the L7/L12 stalk, and near the tRNA binding site of the peptidyltransferase center. This chain is Large ribosomal subunit protein uL6, found in Pseudomonas syringae pv. syringae (strain B728a).